The primary structure comprises 764 residues: Protective antigen (764 aa).

Residues 1–29 (MKKRKVLIPLMALSTILVSSTGNLEVIQA) form the signal peptide. Positions 30-287 (EVKQENRLLN…PEARHPLVAA (258 aa)) are domain 1, calcium-binding; LF and EF binding sites. Positions 43–179 (SSSQGLLGYY…NKKEVISSDN (137 aa)) constitute a PA14 domain. The disordered stretch occupies residues 176–214 (SSDNLQLPELKQKSSNSRKKRSTSAGPTVPDRDNDGIPD). The Ca(2+) site is built by aspartate 206, aspartate 208, aspartate 210, isoleucine 212, and glutamate 217. The interval 231 to 239 (FLSPWISNI) is alpha-clamp. 3 residues coordinate Ca(2+): serine 251, lysine 254, and aspartate 264. Residues 288-516 (YPIVHVDMEN…SEVLPQIQET (229 aa)) form a domain 2, membrane insertion and heptamerization region. The segment at 302 to 333 (KNEDQSTQNTDSQTRTISKNTSTSRTHTSEVH) is disordered. Residues 306–327 (QSTQNTDSQTRTISKNTSTSRT) show a composition bias toward polar residues. Beta stranded transmembrane passes span 331–342 (EVHGNAEVHASF) and 345–354 (IGGSVSAGFS). Residues 517 to 624 (TARIIFNGKD…KMNILIRDKR (108 aa)) form a domain 3, heptamerization region. Residues 625–764 (FHYDRNNIAV…IFSKKGYEIG (140 aa)) form a domain 4, binding to the receptor region.

This sequence belongs to the bacterial binary toxin family. In terms of assembly, interacts with host ANTXR1 and ANTXR2. As to quaternary structure, homooligomer; homooligomerizes to form homoheptamers (PA-63(7)) or homooctamers (PA-63(8)). PA-63(7) or PA-63(8) form ring-shaped oligomers that are in a pre-pore conformation, which do not penetrate the host membrane. PA-63(8) displays an enhanced stability, suggesting that this form circulates in the blood to reach and exert toxicity even in distant tissues. Interacts with lethal factor (LF) and edema factor (EF); can bind LF and EF simultaneously and interaction takes place following homooligomerization on the host cell membrane. PA-63(7) homoheptamer interacts with three molecules of LF to form the PA(7)LF(3) complex, in which the relative position of the N-terminal alpha-helices in the three LFs determines which factor is translocated first. Post-translationally, proteolytic activation by FURIN cleaves the protein in two parts, PA-20 and PA-63; the latter is the mature protein. The cleavage occurs at the cell surface and probably in the serum of infected animals as well; both native and cleaved PA are able to bind to the cell receptor. The release of PA-20 from the remaining receptor-bound PA-63 exposes the binding site for EF and LF, and promotes oligomerization and internalization of the protein.

It is found in the secreted. It localises to the host cell membrane. The protein resides in the host endosome membrane. Protective antigen constitutes one of the three proteins composing the anthrax toxin; it mediates attachment to host cells and translocation of edema factor (EF) and lethal factor (LF) into the host cytoplasm. PA associated with LF forms the lethal toxin (LeTx) and causes death when injected; PA associated with EF forms the edema toxin (EdTx) and produces edema. PA induces immunity to infection with anthrax. Its function is as follows. Mediates the attachment to host cells by binding host cell receptors ANTXR1 and ANTXR2. Following host cell surface attachment, PA is cleaved by FURIN to generate the PA-63 (Protective antigen PA-63) form, which constitutes the mature form of the protein that oligomerizes and forms a pore to translocate the enzymatic toxin components edema factor (EF) and lethal factor (LF) into the host cytosol. Functionally, mature form that oligomerizes and forms a pore to translocate the enzymatic toxin components edema factor (EF) and lethal factor (LF) into the host cytosol. Following attachment to host cell receptors and cleavage by FURIN, homooligomerizes to form ring-shaped oligomers that are in a pre-pore conformation, and associates with EF and LF. Toxin-leaded complexes are then endocytosed in a clathrin-dependent process, followed by a conformational change of oligomerized PA-63 from the pre-pore to pore state, which is triggered by the low pH in the endosome. Once active, the pore mediates unfolding of EF and LF, which pass through the pore and translocate into the host cytosol. This is Protective antigen (pagA) from Bacillus anthracis.